A 255-amino-acid polypeptide reads, in one-letter code: Imidazole glycerol phosphate synthase subunit HisF (255 aa).

Catalysis depends on residues Asp-11 and Asp-130.

This sequence belongs to the HisA/HisF family. Heterodimer of HisH and HisF.

The protein localises to the cytoplasm. It catalyses the reaction 5-[(5-phospho-1-deoxy-D-ribulos-1-ylimino)methylamino]-1-(5-phospho-beta-D-ribosyl)imidazole-4-carboxamide + L-glutamine = D-erythro-1-(imidazol-4-yl)glycerol 3-phosphate + 5-amino-1-(5-phospho-beta-D-ribosyl)imidazole-4-carboxamide + L-glutamate + H(+). The protein operates within amino-acid biosynthesis; L-histidine biosynthesis; L-histidine from 5-phospho-alpha-D-ribose 1-diphosphate: step 5/9. IGPS catalyzes the conversion of PRFAR and glutamine to IGP, AICAR and glutamate. The HisF subunit catalyzes the cyclization activity that produces IGP and AICAR from PRFAR using the ammonia provided by the HisH subunit. This is Imidazole glycerol phosphate synthase subunit HisF from Campylobacter jejuni subsp. jejuni serotype O:6 (strain 81116 / NCTC 11828).